The chain runs to 102 residues: Small ribosomal subunit protein uS10 (102 aa).

This sequence belongs to the universal ribosomal protein uS10 family. Part of the 30S ribosomal subunit.

Functionally, involved in the binding of tRNA to the ribosomes. This chain is Small ribosomal subunit protein uS10, found in Halalkalibacterium halodurans (strain ATCC BAA-125 / DSM 18197 / FERM 7344 / JCM 9153 / C-125) (Bacillus halodurans).